Consider the following 182-residue polypeptide: UPF0690 protein C1orf52 (182 aa).

Disordered stretches follow at residues 1 to 67 (MAAE…RSVT) and 100 to 182 (WKSN…KKKK). The span at 23–32 (SDEEDNIEPE) shows a compositional bias: acidic residues. Positions 50-63 (NKAEKRLPGPDELF) are enriched in basic and acidic residues. Threonine 67 bears the Phosphothreonine mark. Position 132 is a phosphotyrosine (tyrosine 132). Over residues 151–162 (EGEETLESDDEK) the composition is skewed to acidic residues. Serine 158 bears the Phosphoserine mark. Basic and acidic residues predominate over residues 172-182 (VEPGEPAKKKK).

Belongs to the UPF0690 family. As to expression, expressed in all tissues tested including heart, placenta, liver, skeletal muscle, kidney and pancreas. Weak expression in brain and lung.

The sequence is that of UPF0690 protein C1orf52 (C1orf52) from Homo sapiens (Human).